A 77-amino-acid chain; its full sequence is Small ribosomal subunit protein bS21 (77 aa).

The segment at Arg55–Arg77 is disordered.

Belongs to the bacterial ribosomal protein bS21 family.

This is Small ribosomal subunit protein bS21 from Bartonella quintana (strain Toulouse) (Rochalimaea quintana).